A 913-amino-acid chain; its full sequence is Polyribonucleotide nucleotidyltransferase (913 aa).

The tract at residues 407-427 is disordered; the sequence is YMHNYEMPPYSTGETGRVGSP. Residues D521 and D527 each coordinate Mg(2+). Residues 587–646 enclose the KH domain; it reads PRIITTSVPVEKIGEVIGPKGKMINQIQEDTGAEIAIEDDGTVFISSEGGEAAEKAKAII. The S1 motif domain maps to 658 to 730; that stretch reads GETYNGKVVK…DRGKISLAIP (73 aa). Residues 727–913 form a disordered region; sequence LAIPGFEDQE…VRRDFDPFED (187 aa). Basic and acidic residues-rich tracts occupy residues 742–789, 797–865, and 872–898; these read SRGD…RRSD, DRPR…DRRG, and RGSDRNPRYATDDNYDDYRADREERTE.

It belongs to the polyribonucleotide nucleotidyltransferase family. Mg(2+) serves as cofactor.

The protein resides in the cytoplasm. The enzyme catalyses RNA(n+1) + phosphate = RNA(n) + a ribonucleoside 5'-diphosphate. Its function is as follows. Involved in mRNA degradation. Catalyzes the phosphorolysis of single-stranded polyribonucleotides processively in the 3'- to 5'-direction. The sequence is that of Polyribonucleotide nucleotidyltransferase from Bifidobacterium longum (strain DJO10A).